Reading from the N-terminus, the 718-residue chain is Ribosomal RNA large subunit methyltransferase K/L (718 aa).

Residues 44–155 (DAYKVCIYSY…KQFVNVFLCL (112 aa)) form the THUMP domain.

This sequence belongs to the methyltransferase superfamily. RlmKL family.

It localises to the cytoplasm. It catalyses the reaction guanosine(2445) in 23S rRNA + S-adenosyl-L-methionine = N(2)-methylguanosine(2445) in 23S rRNA + S-adenosyl-L-homocysteine + H(+). The catalysed reaction is guanosine(2069) in 23S rRNA + S-adenosyl-L-methionine = N(2)-methylguanosine(2069) in 23S rRNA + S-adenosyl-L-homocysteine + H(+). Specifically methylates the guanine in position 2445 (m2G2445) and the guanine in position 2069 (m7G2069) of 23S rRNA. This Francisella tularensis subsp. novicida (strain U112) protein is Ribosomal RNA large subunit methyltransferase K/L.